The sequence spans 409 residues: Pleckstrin homology domain-containing family O member 1 (409 aa).

The disordered stretch occupies residues 1 to 24 (MMKKNNSAKRGPQDGNQQPAPPEK). One can recognise a PH domain in the interval 21-132 (PPEKVGWVRK…WINALNSAIT (112 aa)). Residues 133–193 (RAKNRILDEV…MLTLDLIQEE (61 aa)) form an interaction with capping proteins (CPs) region. Positions 136 to 308 (NRILDEVTVE…LPNPGQLSRI (173 aa)) are interaction with ATM, CKIP, IFP35 and NMI. The tract at residues 218-267 (LAGSRRRADSDRIQPSADRASSLSRPWEKTDKGATYTPQAPKKLTPTEKG) is disordered. Phosphoserine occurs at positions 227 and 271. The negative regulator of AP-1 activity stretch occupies residues 308–409 (IQDLVARKLE…PHSQYRKSLM (102 aa)). Disordered regions lie at residues 325–350 (EVQG…ESEQ) and 390–409 (TPDS…KSLM). Positions 331–340 (DGKRKAKDPP) are enriched in basic and acidic residues. At serine 342 the chain carries Phosphoserine. Residues 390–402 (TPDSHLRQTTPHS) are compositionally biased toward polar residues.

Heterodimer or homodimer. Interacts with CK2 and actin capping subunits (capping protein CP-alpha and CP-beta). CKIP1 and CK2 together inhibit the activity of actin capping protein at the barbed ends of actin filaments. Interacts with ATM, IFP35, JUN, JUND, NMI and PI3K. Interacts with AKT1, AKT2 and AKT3 (each isozyme of PKB), PtdIns(3,5)P2, PtdIns(4,5)P2 and PtdIns(3,4,5)P2. C-terminal fragments could be released during apoptosis via caspase-3-dependent cleavage. As to expression, abundantly expressed in skeletal muscle and heart, moderately in kidney, liver, brain and placenta and sparingly in the pancreas and lung. Easily detectable in cell lines such as MOLT-4, HEK293 and Jurkat.

It is found in the cell membrane. The protein resides in the nucleus. Its subcellular location is the cytoplasm. Functionally, plays a role in the regulation of the actin cytoskeleton through its interactions with actin capping protein (CP). May function to target CK2 to the plasma membrane thereby serving as an adapter to facilitate the phosphorylation of CP by protein kinase 2 (CK2). Appears to target ATM to the plasma membrane. Appears to also inhibit tumor cell growth by inhibiting AKT-mediated cell-survival. Also implicated in PI3K-regulated muscle differentiation, the regulation of AP-1 activity (plasma membrane bound AP-1 regulator that translocates to the nucleus) and the promotion of apoptosis induced by tumor necrosis factor TNF. When bound to PKB, it inhibits it probably by decreasing PKB level of phosphorylation. The sequence is that of Pleckstrin homology domain-containing family O member 1 (PLEKHO1) from Homo sapiens (Human).